The primary structure comprises 252 residues: U2 small nuclear ribonucleoprotein A' (252 aa).

3 LRR repeats span residues 41–62, 63–84, and 87–108; these read PHDAIDFTDNDIQVLGNFPLSP, RIRTLLLARNRIAQIQSTLPNA, and NLKNLVLASNNIGELADLEVLG. Residues 121–159 enclose the LRRCT domain; that stretch reads NPVTKKENYRYWVLWLCPQVRFLDYVKVKDAERQKAKEL.

Belongs to the U2 small nuclear ribonucleoprotein A family. In terms of assembly, associated with the spliceosome.

It localises to the nucleus. Its function is as follows. Involved in pre-mRNA splicing. This Neurospora crassa (strain ATCC 24698 / 74-OR23-1A / CBS 708.71 / DSM 1257 / FGSC 987) protein is U2 small nuclear ribonucleoprotein A' (lea-1).